The following is a 355-amino-acid chain: Nematocyst expressed protein 3 (355 aa).

Positions 1-18 (MKLTYILLIAVVGVAIEA) are cleaved as a signal peptide. ShKT domains are found at residues 50-89 (CKDVADDCKAFGKLEKDDENSCFNNPDKARNECPVSCKLC), 107-134 (QPQQCSQQSCYETPQWSVQNCAVTCQLC), and 140-182 (SGPV…CNTY). 6 disulfides stabilise this stretch: Cys-50/Cys-89, Cys-57/Cys-82, Cys-71/Cys-86, Cys-116/Cys-131, Cys-149/Cys-175, and Cys-158/Cys-179. The propeptide occupies 92–355 (KRSKKQSDYM…KKSKSHKKQH (264 aa)). The tract at residues 202 to 355 (YQPNAMPTPP…KKSKSHKKQH (154 aa)) is disordered. Positions 207-221 (MPTPPQGVTPAPLPP) are enriched in pro residues. Low complexity-rich tracts occupy residues 222–232 (YFQQQGYGYPQ), 240–270 (VQPGQTQAPTAAQSTPAPVQTTPASGKTTTE), and 277–332 (TEAA…AQSD). The segment covering 335-355 (NKKKHKKDKAQKKSKSHKKQH) has biased composition (basic residues).

The protein belongs to the NEP3 family. In terms of tissue distribution, nematocytes. In late planulae, transcripts are found throughout the ectoderm in nematocytes, with high concentration of expressing cells in the oral pole. In primary polyps, is expressed in nematocytes in the body wall and physa ectoderm and in the upper and lower pharynx.

Its subcellular location is the nematocyst. The protein resides in the secreted. Its function is as follows. Neurotoxin. In vivo, induces pronounced contraction and tail twitching on zebrafish larvae, as well as death 5 hours later. This is Nematocyst expressed protein 3 from Nematostella vectensis (Starlet sea anemone).